Here is a 46-residue protein sequence, read N- to C-terminus: Photosystem II reaction center protein K (46 aa).

Residues 1-9 (MTTLALVLA) constitute a propeptide that is removed on maturation. A helical transmembrane segment spans residues 18-38 (FAPIVDVLPVIPVFFILLAFV).

The protein belongs to the PsbK family. PSII is composed of 1 copy each of membrane proteins PsbA, PsbB, PsbC, PsbD, PsbE, PsbF, PsbH, PsbI, PsbJ, PsbK, PsbL, PsbM, PsbT, PsbX, PsbY, PsbZ, Psb30/Ycf12, at least 3 peripheral proteins of the oxygen-evolving complex and a large number of cofactors. It forms dimeric complexes. This protein is tightly associated with CP43 (psbC), one of the core proteins.

It is found in the plastid. The protein localises to the chloroplast thylakoid membrane. In terms of biological role, one of the components of the core complex of photosystem II (PSII). PSII is a light-driven water:plastoquinone oxidoreductase that uses light energy to abstract electrons from H(2)O, generating O(2) and a proton gradient subsequently used for ATP formation. It consists of a core antenna complex that captures photons, and an electron transfer chain that converts photonic excitation into a charge separation. Required for assembly and/or stability of PSII. The sequence is that of Photosystem II reaction center protein K from Chlamydomonas reinhardtii (Chlamydomonas smithii).